Reading from the N-terminus, the 316-residue chain is MFGFIEGVFLVLTITEFILGNLVNGFIVSINSSYWFKSKKISLSNFIITSLALFRIFLLWIIFIDSLIIVFSYQTHDSGIMMQLIDVFWTFTNHFSIWLISCLSVFYCLKIASFSHPSFLWLKWRASRVVVGMLWGALLLSCVSTMSLMNEFKIYSALTRSKDTPNMTEYIRLKRQEYNLMHVLGNLWKIPSLIVSLVAYLLLLLSLGKHTQQMQQYSIDSRDQSAEAHKRAMRIISSFLLFFLFYFLSFMILSSSRFLPETRIARIIGVVISMSYLVGDSFILIVCNNKLKHTFVAMLPCECGHLKPGSKGPSAS.

The Extracellular segment spans residues Met-1–Gly-7. The helical transmembrane segment at Val-8 to Val-28 threads the bilayer. Over Ser-29–Ser-50 the chain is Cytoplasmic. A helical membrane pass occupies residues Leu-51 to Phe-71. At Ser-72–Asp-86 the chain is on the extracellular side. The chain crosses the membrane as a helical span at residues Val-87–Tyr-107. The Cytoplasmic portion of the chain corresponds to Cys-108–Arg-128. Residues Val-129–Met-149 form a helical membrane-spanning segment. Topologically, residues Asn-150–Asn-186 are extracellular. N-linked (GlcNAc...) asparagine glycosylation occurs at Asn-166. A helical membrane pass occupies residues Leu-187–Leu-207. The Cytoplasmic portion of the chain corresponds to Gly-208–Arg-234. The helical transmembrane segment at Ile-235–Ser-255 threads the bilayer. Over Ser-256–Arg-266 the chain is Extracellular. The chain crosses the membrane as a helical span at residues Ile-267–Cys-287. At Asn-288–Ser-316 the chain is on the cytoplasmic side.

The protein belongs to the G-protein coupled receptor T2R family.

It localises to the membrane. Functionally, gustducin-coupled receptor implicated in the perception of bitter compounds in the oral cavity and the gastrointestinal tract. Signals through PLCB2 and the calcium-regulated cation channel TRPM5. The protein is Taste receptor type 2 member 3 (Tas2r3) of Mus musculus (Mouse).